The following is an 834-amino-acid chain: Translation initiation factor IF-2 (834 aa).

The segment at 1–247 (MTEEKKFSGS…STPATVRKEQ (247 aa)) is disordered. Low complexity predominate over residues 45-101 (GGSRPSRPARPNNNNQNRPNNGGQSQNRNNQNRSNTSTGGQNRSNNGGNRNNRPGSR). Over residues 109–125 (PMIREKKNWSTKPREGQ) the composition is skewed to basic and acidic residues. 2 stretches are compositionally biased toward low complexity: residues 149 to 165 (ASAA…ATKP) and 173 to 201 (ATKP…SARN). Over residues 224 to 233 (GSKKSRRIAA) the composition is skewed to basic residues. A tr-type G domain is found at 335–504 (SRPPVVTIMG…LLQAEVLELK (170 aa)). The G1 stretch occupies residues 344–351 (GHVDHGKT). 344 to 351 (GHVDHGKT) is a binding site for GTP. The segment at 369 to 373 (GITQH) is G2. The interval 390 to 393 (DTPG) is G3. GTP-binding positions include 390–394 (DTPGH) and 444–447 (NKID). A G4 region spans residues 444–447 (NKID). Residues 480–482 (SAK) form a G5 region.

This sequence belongs to the TRAFAC class translation factor GTPase superfamily. Classic translation factor GTPase family. IF-2 subfamily.

The protein resides in the cytoplasm. In terms of biological role, one of the essential components for the initiation of protein synthesis. Protects formylmethionyl-tRNA from spontaneous hydrolysis and promotes its binding to the 30S ribosomal subunits. Also involved in the hydrolysis of GTP during the formation of the 70S ribosomal complex. This chain is Translation initiation factor IF-2, found in Leuconostoc mesenteroides subsp. mesenteroides (strain ATCC 8293 / DSM 20343 / BCRC 11652 / CCM 1803 / JCM 6124 / NCDO 523 / NBRC 100496 / NCIMB 8023 / NCTC 12954 / NRRL B-1118 / 37Y).